A 563-amino-acid polypeptide reads, in one-letter code: Eukaryotic translation initiation factor 3 subunit D (563 aa).

The segment at 95-136 (PGYMRNRNRFNQRGGYRRDNRGGRFQGQGGNMGMQNLSRGRD) is disordered. Residues 294-308 (EFDLLTVGETANDLN) are RNA gate. Positions 528–563 (IPNSTFETDEEDDDDDEDDVENDDGDDEKDEGDGED) are disordered. A compositionally biased stretch (acidic residues) spans 534–563 (ETDEEDDDDDEDDVENDDGDDEKDEGDGED).

Belongs to the eIF-3 subunit D family. As to quaternary structure, component of the eukaryotic translation initiation factor 3 (eIF-3) complex.

The protein localises to the cytoplasm. In terms of biological role, mRNA cap-binding component of the eukaryotic translation initiation factor 3 (eIF-3) complex, which is involved in protein synthesis of a specialized repertoire of mRNAs and, together with other initiation factors, stimulates binding of mRNA and methionyl-tRNAi to the 40S ribosome. The eIF-3 complex specifically targets and initiates translation of a subset of mRNAs involved in cell proliferation. In the eIF-3 complex, eif3d specifically recognizes and binds the 7-methylguanosine cap of a subset of mRNAs. This is Eukaryotic translation initiation factor 3 subunit D from Nematostella vectensis (Starlet sea anemone).